A 146-amino-acid polypeptide reads, in one-letter code: 3-dehydroquinate dehydratase (146 aa).

The active-site Proton acceptor is Y23. Positions 74, 80, and 87 each coordinate substrate. H100 functions as the Proton donor in the catalytic mechanism. Substrate is bound by residues 101–102 (IS) and R111.

It belongs to the type-II 3-dehydroquinase family. In terms of assembly, homododecamer.

The catalysed reaction is 3-dehydroquinate = 3-dehydroshikimate + H2O. It functions in the pathway metabolic intermediate biosynthesis; chorismate biosynthesis; chorismate from D-erythrose 4-phosphate and phosphoenolpyruvate: step 3/7. In terms of biological role, catalyzes a trans-dehydration via an enolate intermediate. The chain is 3-dehydroquinate dehydratase from Bacillus cereus (strain G9842).